A 34-amino-acid chain; its full sequence is uncharacterized protein (34 aa).

Residues 10–30 (LIITSSFFAIAVVLVLSVLLI) traverse the membrane as a helical segment.

Its subcellular location is the membrane. This is an uncharacterized protein from Shigella flexneri.